The following is a 363-amino-acid chain: L-arabinitol 4-dehydrogenase (363 aa).

Zn(2+)-binding residues include C53, H78, E79, C108, C111, C114, C122, and E163. Residues 190–191, D211, R216, I282, and 306–308 each bind NAD(+); these read PI and QYR.

It belongs to the zinc-containing alcohol dehydrogenase family. As to quaternary structure, homotetramer. Zn(2+) is required as a cofactor.

It catalyses the reaction L-arabinitol + NAD(+) = L-xylulose + NADH + H(+). It functions in the pathway carbohydrate degradation; L-arabinose degradation via L-arabinitol; D-xylulose 5-phosphate from L-arabinose (fungal route): step 2/5. Catalyzes the NAD-dependent oxidation of L-arabinitol to L-xylulose in the fungal L-arabinose catabolic pathway. L-arabinose catabolism is important for using plant material as a carbon source. Not active on D-arabinitol, D-sorbitol and D-mannitol. The protein is L-arabinitol 4-dehydrogenase (ard-1) of Neurospora crassa (strain ATCC 24698 / 74-OR23-1A / CBS 708.71 / DSM 1257 / FGSC 987).